The following is a 200-amino-acid chain: Cation channel sperm-associated auxiliary subunit zeta (200 aa).

Basic and acidic residues predominate over residues 1–29 (MEEKPSKVSLKSSDRQGSDEESVHSDTRD). Disordered stretches follow at residues 1–31 (MEEK…RDLW) and 58–78 (NISK…EGYK).

As to quaternary structure, component of the CatSper complex or CatSpermasome composed of the core pore-forming members CATSPER1, CATSPER2, CATSPER3 and CATSPER4 as well as auxiliary members CATSPERB, CATSPERG, CATSPERD, CATSPERE, CATSPERZ, C2CD6/CATSPERT, TMEM249, TMEM262 and EFCAB9. HSPA1 may be an additional auxiliary complex member. The core complex members CATSPER1, CATSPER2, CATSPER3 and CATSPER4 form a heterotetrameric channel. The auxiliary CATSPERB, CATSPERG, CATSPERD and CATSPERE subunits form a pavilion-like structure over the pore which stabilizes the complex through interactions with CATSPER4, CATSPER3, CATSPER1 and CATSPER2 respectively. TMEM262/CATSPERH interacts with CATSPERB, further stabilizing the complex. C2CD6/CATSPERT interacts at least with CATSPERD and is required for targeting the CatSper complex in the flagellar membrane. Interacts with EFCAB9; the interaction is direct, Ca(2+)-dependent and connects EFCAB9 with the CatSper complex. Dissociates from EFCAB9 at elevated pH.

Its subcellular location is the cell projection. The protein resides in the cilium. It localises to the flagellum membrane. Auxiliary component of the CatSper complex, a complex involved in sperm cell hyperactivation. Sperm cell hyperactivation is needed for sperm motility which is essential late in the preparation of sperm for fertilization. Required for a distribution of the CatSper complex in linear quadrilateral nanodomains along the flagellum, maximizing fertilization inside the mammalian female reproductive tract. Together with EFCAB9, associates with the CatSper channel pore and is required for the two-row structure of each single CatSper channel. In Homo sapiens (Human), this protein is Cation channel sperm-associated auxiliary subunit zeta.